A 185-amino-acid polypeptide reads, in one-letter code: Anaphase-promoting complex subunit 10 (185 aa).

Residue T2 is modified to N-acetylthreonine. The region spanning 2–185 is the DOC domain; it reads TTPNKTPPGA…IDFMMYRSIR (184 aa). The residue at position 169 (K169) is an N6-acetyllysine.

The protein belongs to the APC10 family. As to quaternary structure, the mammalian APC/C is composed at least of 14 distinct subunits ANAPC1, ANAPC2, CDC27/APC3, ANAPC4, ANAPC5, CDC16/APC6, ANAPC7, CDC23/APC8, ANAPC10, ANAPC11, CDC26/APC12, ANAPC13, ANAPC15 and ANAPC16 that assemble into a complex of at least 19 chains with a combined molecular mass of around 1.2 MDa; APC/C interacts with FZR1 and FBXO5. The C-terminus of APC10 binds to CDC27/APC3. Interacts with PIWIL1; interaction only takes place when PIWIL1 binds piRNA. Interacts with FBXO43; the interaction is direct.

It participates in protein modification; protein ubiquitination. In terms of biological role, component of the anaphase promoting complex/cyclosome (APC/C), a cell cycle-regulated E3 ubiquitin ligase that controls progression through mitosis and the G1 phase of the cell cycle. The APC/C complex acts by mediating ubiquitination and subsequent degradation of target proteins: it mainly mediates the formation of 'Lys-11'-linked polyubiquitin chains and, to a lower extent, the formation of 'Lys-48'- and 'Lys-63'-linked polyubiquitin chains. The APC/C complex catalyzes assembly of branched 'Lys-11'-/'Lys-48'-linked branched ubiquitin chains on target proteins. This chain is Anaphase-promoting complex subunit 10 (Anapc10), found in Mus musculus (Mouse).